A 697-amino-acid polypeptide reads, in one-letter code: Elongation factor G (697 aa).

The tr-type G domain maps to 8–290; the sequence is ERYRNIGIMA…AVLSYMPSPV (283 aa). Residues 17–24, 88–92, and 142–145 each bind GTP; these read AHIDAGKT, DTPGH, and NKMD.

It belongs to the TRAFAC class translation factor GTPase superfamily. Classic translation factor GTPase family. EF-G/EF-2 subfamily.

The protein resides in the cytoplasm. Functionally, catalyzes the GTP-dependent ribosomal translocation step during translation elongation. During this step, the ribosome changes from the pre-translocational (PRE) to the post-translocational (POST) state as the newly formed A-site-bound peptidyl-tRNA and P-site-bound deacylated tRNA move to the P and E sites, respectively. Catalyzes the coordinated movement of the two tRNA molecules, the mRNA and conformational changes in the ribosome. The protein is Elongation factor G of Nitrosococcus oceani (strain ATCC 19707 / BCRC 17464 / JCM 30415 / NCIMB 11848 / C-107).